Reading from the N-terminus, the 86-residue chain is Toxin Tpa6 (86 aa).

The N-terminal stretch at 1–20 (MSIFPIALALLLIGLEEGEA) is a signal peptide. The region spanning 22–85 (RDGYPLSKNN…WGDPGTKPCM (64 aa)) is the LCN-type CS-alpha/beta domain. 4 disulfides stabilise this stretch: Cys-33-Cys-84, Cys-37-Cys-58, Cys-43-Cys-64, and Cys-47-Cys-66.

This sequence belongs to the long (4 C-C) scorpion toxin superfamily. Sodium channel inhibitor family. Beta subfamily. In terms of tissue distribution, expressed by the venom gland.

The protein resides in the secreted. Its function is as follows. Beta toxins bind voltage-independently at site-4 of sodium channels (Nav) and shift the voltage of activation toward more negative potentials thereby affecting sodium channel activation and promoting spontaneous and repetitive firing. This Tityus pachyurus (Colombian scorpion) protein is Toxin Tpa6.